Here is a 1683-residue protein sequence, read N- to C-terminus: A-kinase anchor protein SPHKAP (1683 aa).

Polar residues-rich tracts occupy residues Met1–Glu14 and Ala289–Ala301. Disordered stretches follow at residues Met1 to Ser30, Arg275 to Tyr320, and Leu582 to Glu601. The PKA-RII subunit binding domain stretch occupies residues Phe910–Ala927. A disordered region spans residues Leu960–Glu983. A phosphoserine mark is found at Ser1006, Ser1066, Ser1088, Ser1101, Ser1102, Ser1105, Ser1240, and Ser1269. Disordered regions lie at residues Val1359–Glu1387 and Glu1415–Ser1518. The span at Gly1362–Ser1371 shows a compositional bias: polar residues. A compositionally biased stretch (basic and acidic residues) spans Leu1469–Arg1490. Residues Pro1492 to Ser1504 are compositionally biased toward low complexity.

Belongs to the AKAP110 family. As to quaternary structure, interacts (via the PKA-RII subunit binding domain) with the RI subunit of PKA. Interacts with SPHK1; the interaction greatly reduces SPHK1 activity. Abundant in heart ventricle (at protein level).

It is found in the cytoplasm. Functionally, anchoring protein that binds preferentially to the type I regulatory subunit of c-AMP-dependent protein kinase (PKA type I) and targets it to distinct subcellular compartments. May act as a converging factor linking cAMP and sphingosine signaling pathways. Plays a regulatory role in the modulation of SPHK1. The polypeptide is A-kinase anchor protein SPHKAP (Sphkap) (Rattus norvegicus (Rat)).